The chain runs to 427 residues: Sensor histidine kinase ArsS (427 aa).

2 helical membrane passes run Phe-3–Phe-23 and Asn-131–Leu-151. The 53-residue stretch at Leu-151–Glu-203 folds into the HAMP domain. The region spanning Ser-211 to Ile-398 is the Histidine kinase domain. The residue at position 214 (His-214) is a Phosphohistidine; by autocatalysis.

Post-translationally, autophosphorylated.

The protein localises to the membrane. The catalysed reaction is ATP + protein L-histidine = ADP + protein N-phospho-L-histidine.. Its function is as follows. Member of the two-component regulatory system ArsS/ArsR that regulates genes involved in biofilm formation and acid adaptation by acting on major ammonia-producing pathways. Functions as a sensor protein kinase which is autophosphorylated at a histidine residue and transfers its phosphate group to the conserved aspartic acid residue in the regulatory domain of ArsR. In turn, ArsR binds to the upstream promoter regions of target genes including ureA, amiE and amiF to positively regulate their expression in response to acidic pH. Also participates in acidic acclimatation in a phosphorylation-independent pathway by regulating acid-induced trafficking of urease and its accessory proteins to the inner membrane. The sequence is that of Sensor histidine kinase ArsS from Helicobacter pylori (strain ATCC 700392 / 26695) (Campylobacter pylori).